The following is a 621-amino-acid chain: MAU2 chromatid cohesion factor homolog (621 aa).

TPR repeat units lie at residues 96–129, 451–484, and 491–524; these read FDTA…SQNN, GGFY…ANAE, and SCSL…ASKI.

It belongs to the SCC4/mau-2 family. As to quaternary structure, interacts with Nipped-B to form the cohesin loading complex.

Its subcellular location is the nucleus. The protein localises to the nucleoplasm. In terms of biological role, required for association of the cohesin complex with chromatin during interphase. Plays a role in sister chromatid cohesion and normal progression through prometaphase. This chain is MAU2 chromatid cohesion factor homolog, found in Drosophila virilis (Fruit fly).